The following is a 205-amino-acid chain: Phosphoenolpyruvate guanylyltransferase (205 aa).

3 residues coordinate phosphoenolpyruvate: T137, G153, and S156.

This sequence belongs to the CofC family.

The enzyme catalyses phosphoenolpyruvate + GTP + H(+) = enolpyruvoyl-2-diphospho-5'-guanosine + diphosphate. It participates in cofactor biosynthesis; coenzyme F420 biosynthesis. In terms of biological role, guanylyltransferase that catalyzes the activation of phosphoenolpyruvate (PEP) as enolpyruvoyl-2-diphospho-5'-guanosine, via the condensation of PEP with GTP. It is involved in the biosynthesis of coenzyme F420, a hydride carrier cofactor. In Rubrobacter xylanophilus (strain DSM 9941 / JCM 11954 / NBRC 16129 / PRD-1), this protein is Phosphoenolpyruvate guanylyltransferase.